We begin with the raw amino-acid sequence, 399 residues long: Chromosomal replication initiator protein DnaA (399 aa).

Residues 1 to 64 (MELNALIKKI…EEEVRKLIEV (64 aa)) form a domain I, interacts with DnaA modulators region. Positions 64-77 (VKEKEEKKKVEIKD) are domain II. The tract at residues 78 to 290 (FLNPKYTLEN…GKIKLIKLKG (213 aa)) is domain III, AAA+ region. Ile89, Asn94, Gly122, Thr123, Gly124, Lys125, Thr126, and His127 together coordinate ADP. Position 89 (Ile89) interacts with ATP. An ATP-binding site is contributed by Gly122. ATP-binding residues include Gly124, Lys125, Thr126, and His127. Thr126 lines the Mg(2+) pocket. SsDNA is bound at residue Val156. Asp180 is an ATP binding site. A Mg(2+)-binding site is contributed by Asp181. The ssDNA site is built by Lys188, Arg190, and Thr191. ATP is bound at residue Arg277. The domain IV, binds dsDNA stretch occupies residues 291-399 (FEGLERKERK…LEKQAFDKIC (109 aa)).

The protein belongs to the DnaA family. In the presence of ATP analog AMP-PCP forms a linear, right-handed spiral filament with 4 subunits arranged head-to-tail, about 122 Angstroms wide and about 360 Angstroms long. Mg(2+)-AMP-PCP binds at the subunit interface with the gamma phosphate coordinated by adjacent subunits. dsDNA probably wraps on the outside of the filament. ssDNA binds to the center of the helical filament via the AAA+ domain, which stretches the DNA.

Its subcellular location is the cytoplasm. Plays an essential role in the initiation and regulation of chromosomal replication. ATP-DnaA binds to the origin of replication (oriC) to initiate formation of the DNA replication initiation complex once per cell cycle. Binds the DnaA box (a 9 base pair repeat at the origin) and separates the double-stranded (ds)DNA. Forms a right-handed helical filament on oriC DNA; dsDNA binds to the exterior of the filament while single-stranded (ss)DNA is stabiized in the filament's interior. The ATP-DnaA-oriC complex binds and stabilizes one strand of the AT-rich DNA unwinding element (DUE), permitting loading of DNA polymerase. After initiation quickly degrades to an ADP-DnaA complex that is not apt for DNA replication. Binds acidic phospholipids. Its function is as follows. Able to melt short unstable dsDNA (15-mer with melting temperature, TM, 43 degrees Celsius) in the presence of a non-hydrolyzable ATP analog; a more stable dsDNA (20-mer, TM 55 degrees Celsius) is poor substrate. ADP does not support dsDNA melting. Addition of DnaA-AMP-PCP (an ATP analog, beta,gamma-methyleneadenosine 5'-triphosphate) to an oric-containing plasmid causes a DNA shift to more positively supercoiled topological species, stabilizing a positive wrap and right-handed filament as seen in the crystal structure without DNA. Filament formation generated by positive supercoiling may destabilize the origin unwinding element through compensatory negative supercoiling strain. In Aquifex aeolicus (strain VF5), this protein is Chromosomal replication initiator protein DnaA.